Reading from the N-terminus, the 473-residue chain is Anthocyanidin 5,3-O-glucosyltransferase (473 aa).

The protein belongs to the UDP-glycosyltransferase family.

Its pathway is pigment biosynthesis; anthocyanin biosynthesis. Functionally, sequentially catalyzes two glycosylation steps at the 5-OH and 3-OH positions of anthocyanidin. Unglycosylated anthocyanidin or anthocyanidin 5-O-glucoside, but not anthocyanidin 3-O-glucoside, can be used as glucosyl acceptor. In Rosa hybrid cultivar, this protein is Anthocyanidin 5,3-O-glucosyltransferase (RhGT1).